Here is a 1010-residue protein sequence, read N- to C-terminus: Plasma membrane ATPase 2 (1010 aa).

Basic and acidic residues predominate over residues 1–14 (MQRNNGEGRPEGMH). Disordered stretches follow at residues 1 to 126 (MQRN…EDED) and 139 to 165 (QDQE…PEEL). Over 1–201 (MQRNNGEGRP…KEEKTNNIKK (201 aa)) the chain is Cytoplasmic. Positions 25-34 (FKNNASPQDD) are enriched in polar residues. The span at 42-52 (YEEGGVEDSAV) shows a compositional bias: acidic residues. Residues 68-106 (APNTHAQQANLQSGNTSITHETQSTSRGQEATTSPSLSA) are compositionally biased toward polar residues. Residues 140-151 (DQEEEQVEEEES) are compositionally biased toward acidic residues. A helical membrane pass occupies residues 202–222 (FLSFFVGPIQFVMELAAALAA). Over 223–226 (GLRD) the chain is Extracellular. The chain crosses the membrane as a helical span at residues 227–246 (WVDFGVICALLLLNATVGFV). The Cytoplasmic segment spans residues 247–377 (QEYQAGSIVD…SQGHFTEVLN (131 aa)). Residues 378–399 (GIGTILLVLVILTLLCIYTAAF) form a helical membrane-spanning segment. The Extracellular portion of the chain corresponds to 400 to 410 (YRSVRLAALLE). Residues 411–433 (YTLAITIIGVPVGLPAVVTTTMA) traverse the membrane as a helical segment. The Cytoplasmic segment spans residues 434 to 805 (VGAAYLAKKK…LIIRNQLLNL (372 aa)). The active-site 4-aspartylphosphate intermediate is the Asp-464. Residues Asp-720 and Asp-724 each contribute to the Mg(2+) site. A helical transmembrane segment spans residues 806–824 (ELIVFIAIFADVATLAIAY). Residues 825–840 (DNAPYAMKPVKWNLPR) lie on the Extracellular side of the membrane. Residues 841–860 (LWGLATIVGILLAIGTWIVN) traverse the membrane as a helical segment. At 861–912 (TTMIAQGQNRGIVQNFGVQDEVLFLQISLTENWLIFITRCSGPFWSSFPSWQ) the chain is on the cytoplasmic side. A helical membrane pass occupies residues 913–933 (LSGAVLVVDILATLFCIFGWF). Over 934–946 (KGGHQTSIVAVIR) the chain is Extracellular. A helical membrane pass occupies residues 947–963 (IWMYSFGIFCLIAGVYY). Topologically, residues 964 to 1010 (ILSESSSFDRWMHGKHKERGTTRKLEDFVMQLQRTSTHHEAEGKVTS) are cytoplasmic.

The protein belongs to the cation transport ATPase (P-type) (TC 3.A.3) family. Type IIIA subfamily. Post-translationally, in addition to transient phosphorylation of the active site Asp residue, this protein, but not the product of the pma1 locus, is phosphorylated efficiently in isolated plasma membrane.

It localises to the cell membrane. The catalysed reaction is ATP + H2O + H(+)(in) = ADP + phosphate + 2 H(+)(out). Its function is as follows. The plasma membrane ATPase of plants and fungi is a hydrogen ion pump. The proton gradient it generates drives the active transport of nutrients by H(+)-symport. The resulting external acidification and/or internal alkinization may mediate growth responses. This is Plasma membrane ATPase 2 (pma2) from Schizosaccharomyces pombe (strain 972 / ATCC 24843) (Fission yeast).